Reading from the N-terminus, the 286-residue chain is Undecaprenyl-diphosphatase (286 aa).

7 consecutive transmembrane segments (helical) span residues 50–70, 97–117, 127–147, 165–185, 200–220, 230–250, and 262–282; these read PGVSVTAVIQLGSIVAVIAYF, LGIAMTIGTLPILFAGLAIKL, LRSVPAIAGVSILMALLLALA, GLLVGLAQVLALIPGVSRSGS, AARFSFLLGIPAITIAGLVEL, GGVLPLMVGIVSAAVVSWLAI, and TWVFVIYRLLFGILLLAWWAG.

It belongs to the UppP family.

Its subcellular location is the cell inner membrane. It carries out the reaction di-trans,octa-cis-undecaprenyl diphosphate + H2O = di-trans,octa-cis-undecaprenyl phosphate + phosphate + H(+). Its function is as follows. Catalyzes the dephosphorylation of undecaprenyl diphosphate (UPP). Confers resistance to bacitracin. This chain is Undecaprenyl-diphosphatase, found in Synechococcus sp. (strain WH7803).